The chain runs to 224 residues: 7-cyano-7-deazaguanine synthase (224 aa).

9-19 (LSGGLDSATVL) contacts ATP. Positions 189, 199, 202, and 205 each coordinate Zn(2+).

This sequence belongs to the QueC family. Zn(2+) serves as cofactor.

The enzyme catalyses 7-carboxy-7-deazaguanine + NH4(+) + ATP = 7-cyano-7-deazaguanine + ADP + phosphate + H2O + H(+). The protein operates within purine metabolism; 7-cyano-7-deazaguanine biosynthesis. Catalyzes the ATP-dependent conversion of 7-carboxy-7-deazaguanine (CDG) to 7-cyano-7-deazaguanine (preQ(0)). The polypeptide is 7-cyano-7-deazaguanine synthase (Ralstonia nicotianae (strain ATCC BAA-1114 / GMI1000) (Ralstonia solanacearum)).